Here is a 130-residue protein sequence, read N- to C-terminus: Small ribosomal subunit protein uS8x (130 aa).

It belongs to the universal ribosomal protein uS8 family.

The protein is Small ribosomal subunit protein uS8x (RPS15AD) of Arabidopsis thaliana (Mouse-ear cress).